Reading from the N-terminus, the 118-residue chain is U-scoloptoxin(05)-Cw1a (118 aa).

Residues 1 to 22 (MNPLNLSTFIVFTLFAASATTA) form the signal peptide.

The protein belongs to the scoloptoxin-05 family. In terms of processing, contains 5 disulfide bonds. Expressed by the venom gland.

It is found in the secreted. This is U-scoloptoxin(05)-Cw1a from Cormocephalus westwoodi (Westwood's green centipede).